Here is a 223-residue protein sequence, read N- to C-terminus: Putative germin-like protein subfamily 1 member 12 (223 aa).

Residues 1–24 form the signal peptide; that stretch reads MNMKNLYLAILYLLAASTLPFAIA. A disulfide bridge links Cys-34 with Cys-51. One can recognise a Cupin type-1 domain in the interval 65–216; it reads SGLDKARTTE…AFQLDPKVII (152 aa). Asn-81 carries an N-linked (GlcNAc...) asparagine glycan. Positions 114, 116, and 121 each coordinate Mn(2+). An N-linked (GlcNAc...) asparagine glycan is attached at Asn-145. A Mn(2+)-binding site is contributed by His-162.

Belongs to the germin family. As to quaternary structure, oligomer (believed to be a pentamer but probably hexamer).

The protein resides in the secreted. The protein localises to the extracellular space. Its subcellular location is the apoplast. In terms of biological role, may play a role in plant defense. Probably has no oxalate oxidase activity even if the active site is conserved. The protein is Putative germin-like protein subfamily 1 member 12 of Arabidopsis thaliana (Mouse-ear cress).